Here is a 227-residue protein sequence, read N- to C-terminus: Cytidylate kinase (227 aa).

An ATP-binding site is contributed by 12-20; it reads GPSGAGKGT.

This sequence belongs to the cytidylate kinase family. Type 1 subfamily.

It is found in the cytoplasm. It carries out the reaction CMP + ATP = CDP + ADP. The enzyme catalyses dCMP + ATP = dCDP + ADP. This is Cytidylate kinase from Escherichia fergusonii (strain ATCC 35469 / DSM 13698 / CCUG 18766 / IAM 14443 / JCM 21226 / LMG 7866 / NBRC 102419 / NCTC 12128 / CDC 0568-73).